We begin with the raw amino-acid sequence, 458 residues long: 3-isopropylmalate dehydratase large subunit (458 aa).

3 residues coordinate [4Fe-4S] cluster: cysteine 339, cysteine 399, and cysteine 402.

This sequence belongs to the aconitase/IPM isomerase family. LeuC type 1 subfamily. As to quaternary structure, heterodimer of LeuC and LeuD. It depends on [4Fe-4S] cluster as a cofactor.

It catalyses the reaction (2R,3S)-3-isopropylmalate = (2S)-2-isopropylmalate. It participates in amino-acid biosynthesis; L-leucine biosynthesis; L-leucine from 3-methyl-2-oxobutanoate: step 2/4. Its function is as follows. Catalyzes the isomerization between 2-isopropylmalate and 3-isopropylmalate, via the formation of 2-isopropylmaleate. The chain is 3-isopropylmalate dehydratase large subunit from Lactococcus lactis subsp. cremoris (strain SK11).